The following is a 1050-amino-acid chain: Valine--tRNA ligase (1050 aa).

A compositionally biased stretch (basic and acidic residues) spans 37 to 57 (EKKAAASDKPVKEAKAKKEQT). Residues 37 to 72 (EKKAAASDKPVKEAKAKKEQTVEAAEPVDQTPTGQR) are disordered. Residues 127–137 (PNVTGNLHVGH) carry the 'HIGH' region motif. A 'KMSKS' region motif is present at residues 642–646 (KMSKS). Lys-645 provides a ligand contact to ATP.

Belongs to the class-I aminoacyl-tRNA synthetase family.

The catalysed reaction is tRNA(Val) + L-valine + ATP = L-valyl-tRNA(Val) + AMP + diphosphate. The chain is Valine--tRNA ligase from Caenorhabditis elegans.